A 157-amino-acid chain; its full sequence is NADH-quinone oxidoreductase subunit I (157 aa).

4Fe-4S ferredoxin-type domains lie at Y47–A78 and S94–Q123. [4Fe-4S] cluster is bound by residues C58, C61, C64, C68, C103, C106, C109, and C113.

It belongs to the complex I 23 kDa subunit family. In terms of assembly, NDH-1 is composed of 14 different subunits. Subunits NuoA, H, J, K, L, M, N constitute the membrane sector of the complex. It depends on [4Fe-4S] cluster as a cofactor.

The protein resides in the cell inner membrane. The catalysed reaction is a quinone + NADH + 5 H(+)(in) = a quinol + NAD(+) + 4 H(+)(out). In terms of biological role, NDH-1 shuttles electrons from NADH, via FMN and iron-sulfur (Fe-S) centers, to quinones in the respiratory chain. The immediate electron acceptor for the enzyme in this species is believed to be ubiquinone. Couples the redox reaction to proton translocation (for every two electrons transferred, four hydrogen ions are translocated across the cytoplasmic membrane), and thus conserves the redox energy in a proton gradient. The polypeptide is NADH-quinone oxidoreductase subunit I (nuoI) (Protochlamydia amoebophila (strain UWE25)).